We begin with the raw amino-acid sequence, 120 residues long: Large ribosomal subunit protein uL18 (120 aa).

The protein belongs to the universal ribosomal protein uL18 family. In terms of assembly, part of the 50S ribosomal subunit; part of the 5S rRNA/L5/L18/L25 subcomplex. Contacts the 5S and 23S rRNAs.

This is one of the proteins that bind and probably mediate the attachment of the 5S RNA into the large ribosomal subunit, where it forms part of the central protuberance. This is Large ribosomal subunit protein uL18 from Gluconacetobacter diazotrophicus (strain ATCC 49037 / DSM 5601 / CCUG 37298 / CIP 103539 / LMG 7603 / PAl5).